The chain runs to 468 residues: Argininosuccinate lyase (468 aa).

It belongs to the lyase 1 family. Argininosuccinate lyase subfamily.

It is found in the cytoplasm. The catalysed reaction is 2-(N(omega)-L-arginino)succinate = fumarate + L-arginine. It participates in amino-acid biosynthesis; L-arginine biosynthesis; L-arginine from L-ornithine and carbamoyl phosphate: step 3/3. The polypeptide is Argininosuccinate lyase (Sphingopyxis alaskensis (strain DSM 13593 / LMG 18877 / RB2256) (Sphingomonas alaskensis)).